The primary structure comprises 193 residues: tRNA (cytidine(56)-2'-O)-methyltransferase (193 aa).

S-adenosyl-L-methionine-binding positions include L86 and G115–V119.

Belongs to the aTrm56 family. As to quaternary structure, homodimer.

Its subcellular location is the cytoplasm. The enzyme catalyses cytidine(56) in tRNA + S-adenosyl-L-methionine = 2'-O-methylcytidine(56) in tRNA + S-adenosyl-L-homocysteine + H(+). Specifically catalyzes the AdoMet-dependent 2'-O-ribose methylation of cytidine at position 56 in tRNAs. The polypeptide is tRNA (cytidine(56)-2'-O)-methyltransferase (Haloquadratum walsbyi (strain DSM 16790 / HBSQ001)).